A 284-amino-acid polypeptide reads, in one-letter code: Interferon antagonist OPG040 (284 aa).

ANK repeat units lie at residues 29–58 (HGHS…LKNL), 60–89 (ENEF…DDSQ), 93–122 (KGNT…RLMF), 127–157 (GWKT…TFDL), 159–188 (ILLS…STNT), and 193–222 (LFIP…NIYS).

The protein belongs to the orthopoxvirus OPG039 family.

The protein resides in the host cytoplasm. Its subcellular location is the host nucleus. In terms of biological role, inhibits antiviral activity induced by type I interferons. Does not block signal transduction of IFN, but is important to counter the host antiviral state induced by a pre-treatment with IFN. Plays a role in the inhibition of host NF-kappa-B activation by preventing the acetylation of the RELA/p65 subunit of NF-kappaB. In Bos taurus (Bovine), this protein is Interferon antagonist OPG040 (OPG039).